The chain runs to 620 residues: MSFDTAKYPTLALVDSTAELRLLPKESLPKLCDELRRYLLDSVSRSSGHFASGLGTVELTVALHYVYNTPFDQLIWDVGHQAYPHKILTGRRDRIGTIRQKGGLHPFPWRGESEYDVLSVGHSSTSISAGIGIAVAAAREEKNRRTVCVIGDGAITAGMAFEAMNHAGDIRPDMLVILNDNEMSISENVGALNNHLAQLLSGKLYSTLREGGKRVFSNVPPIKELLKRTEEHIKGMVVPGTLFEELGFNYIGPVDGHDVLGLVNTLKNMRDLKGPQFLHIMTKKGRGYEPAEKDPITFHAVPKFDPESGTLPKSSGGQPSYSKIFGDWLCETAAKDDKLMAITPAMREGSGMVEFSRKYPAQYFDVAIAEQHAVTFAAGLAIGGYKPVVAIYSTFLQRAYDQVIHDVAIQKLPVLFAIDRAGIVGADGQTHQGAFDLSYLRCIPDMVIMTPSDENECRQMLFTGYHYNDGPSAVRYPRGNALGVTLEPLQKLPIGKGVVKRHGEKVALLNFGTLLPEATQAAEALNATLVDMRFVKPLDEALIMELAGRHEALVTIEENAVMGGAGSGVNEVLMAKRKPVPVLNIGLPDHFIPQGTQDEARAEIGLTASGIEQRVRDWLA.

Residues His80 and 121 to 123 each bind thiamine diphosphate; that span reads GHS. Asp152 contributes to the Mg(2+) binding site. Thiamine diphosphate is bound by residues 153 to 154, Asn181, Tyr288, and Glu370; that span reads GA. Asn181 lines the Mg(2+) pocket.

It belongs to the transketolase family. DXPS subfamily. Homodimer. It depends on Mg(2+) as a cofactor. The cofactor is thiamine diphosphate.

It catalyses the reaction D-glyceraldehyde 3-phosphate + pyruvate + H(+) = 1-deoxy-D-xylulose 5-phosphate + CO2. It functions in the pathway metabolic intermediate biosynthesis; 1-deoxy-D-xylulose 5-phosphate biosynthesis; 1-deoxy-D-xylulose 5-phosphate from D-glyceraldehyde 3-phosphate and pyruvate: step 1/1. In terms of biological role, catalyzes the acyloin condensation reaction between C atoms 2 and 3 of pyruvate and glyceraldehyde 3-phosphate to yield 1-deoxy-D-xylulose-5-phosphate (DXP). This chain is 1-deoxy-D-xylulose-5-phosphate synthase, found in Cronobacter sakazakii (strain ATCC BAA-894) (Enterobacter sakazakii).